We begin with the raw amino-acid sequence, 409 residues long: Glucan endo-1,6-beta-glucosidase B (409 aa).

The N-terminal stretch at 1-16 is a signal peptide; that stretch reads MKFILPLFTSLPVALA. N-linked (GlcNAc...) asparagine glycosylation is present at asparagine 35. Residue glutamate 228 is the Proton donor of the active site. Glutamate 330 acts as the Nucleophile in catalysis.

Belongs to the glycosyl hydrolase 5 (cellulase A) family.

It localises to the secreted. It carries out the reaction Random hydrolysis of (1-&gt;6)-linkages in (1-&gt;6)-beta-D-glucans.. Beta-glucanases participate in the metabolism of beta-glucan, the main structural component of the cell wall. Acts on lutean, pustulan and 1,6-oligo-beta-D-glucosides. In Emericella nidulans (strain FGSC A4 / ATCC 38163 / CBS 112.46 / NRRL 194 / M139) (Aspergillus nidulans), this protein is Glucan endo-1,6-beta-glucosidase B (exgB).